Consider the following 123-residue polypeptide: Intracellular iron chaperone frataxin (123 aa).

Homodimer, upon Fe(2+) binding. Interacts with the SufS/SufU complex. Interacts with CpfC. Requires Fe(2+) as cofactor.

The protein localises to the cytoplasm. In terms of biological role, plays an essential role in iron intracellular trafficking to iron cofactor biogenesis systems including iron-sulfur cluster (Fe-S) or heme assembly. Promotes the biosynthesis of iron-sulfur clusters by delivering Fe to the complex composed of the cysteine desulfurase SufS and the zinc-dependent sulfurtransferase SufU. Also plays a critical role in coproporphyrin-dependent heme b biogenesis and thus provides an essential function for the bacterial global metabolism. The sequence is that of Intracellular iron chaperone frataxin (fra) from Bacillus subtilis (strain 168).